A 969-amino-acid chain; its full sequence is Manganese resistance protein MNR2 (969 aa).

Residues 1–11 are compositionally biased toward basic and acidic residues; that stretch reads MSTDNSQKDEG. Disordered regions lie at residues 1 to 49, 96 to 153, 167 to 186, and 199 to 256; these read MSTD…SRRP, GAFI…DLSP, HKSFVDENSPTDRRQSNANN, and VNNN…NNSS. The Cytoplasmic portion of the chain corresponds to 1–912; it reads MSTDNSQKDE…DMNDVLGKIT (912 aa). Over residues 13–23 the composition is skewed to low complexity; that stretch reads PLLSPYSSSPQ. The segment covering 24–36 has biased composition (basic residues); that stretch reads LRKKKRNQKRRKD. Residues 37–48 are compositionally biased toward basic and acidic residues; sequence KFVGHLKSDSRR. The residue at position 114 (S114) is a Phosphoserine. Over residues 141–152 the composition is skewed to polar residues; the sequence is SDQNRSLVSDLS. Phosphoserine is present on S175. T177 bears the Phosphothreonine mark. Position 182 is a phosphoserine (S182). Low complexity-rich tracts occupy residues 225-234 and 244-256; these read NKNSKSTSSD and SRPSSSLSSNNSS. Position 383 is a phosphoserine (S383). Disordered stretches follow at residues 559 to 662 and 746 to 769; these read VRRR…KPRE and QSDDSSDSDSSDSDSDSGASDEDA. Over residues 565–578 the composition is skewed to basic and acidic residues; sequence EKQESATLDHESIS. At T571 the chain carries Phosphothreonine. 2 positions are modified to phosphoserine: S576 and S582. Low complexity-rich tracts occupy residues 590-607 and 622-632; these read SNESNANNNNSTSNASRS and ANRTTNTSSSS. The span at 749 to 769 shows a compositional bias: acidic residues; it reads DSSDSDSSDSDSDSGASDEDA. Residues 913-933 traverse the membrane as a helical segment; that stretch reads ILGTIVLPMNVITGLWGMNVI. Residues 934 to 941 lie on the Extracellular side of the membrane; sequence VPGQYRDS. A helical membrane pass occupies residues 942 to 962; the sequence is LTWFIGIVLFMCMLACSAYMY. The Cytoplasmic portion of the chain corresponds to 963-969; sequence TKRRFGF.

This sequence belongs to the CorA metal ion transporter (MIT) (TC 1.A.35) family.

It localises to the membrane. The protein is Manganese resistance protein MNR2 (MNR2) of Saccharomyces cerevisiae (strain ATCC 204508 / S288c) (Baker's yeast).